Reading from the N-terminus, the 437-residue chain is ATP-dependent protease ATPase subunit HslU (437 aa).

ATP is bound by residues V18, 60–65, D250, E315, and R387; that span reads GCGKTE.

Belongs to the ClpX chaperone family. HslU subfamily. A double ring-shaped homohexamer of HslV is capped on each side by a ring-shaped HslU homohexamer. The assembly of the HslU/HslV complex is dependent on binding of ATP.

The protein resides in the cytoplasm. In terms of biological role, ATPase subunit of a proteasome-like degradation complex; this subunit has chaperone activity. The binding of ATP and its subsequent hydrolysis by HslU are essential for unfolding of protein substrates subsequently hydrolyzed by HslV. HslU recognizes the N-terminal part of its protein substrates and unfolds these before they are guided to HslV for hydrolysis. The sequence is that of ATP-dependent protease ATPase subunit HslU from Methylorubrum populi (strain ATCC BAA-705 / NCIMB 13946 / BJ001) (Methylobacterium populi).